A 141-amino-acid chain; its full sequence is Albumin-8 (141 aa).

The first 25 residues, 1–25, serve as a signal peptide directing secretion; sequence MARFSIVFAAAGVLLLVAMAPVSEA. The propeptide occupies 26–38; the sequence is STTTIITTIIEEN. Intrachain disulfides connect cysteine 49-cysteine 100, cysteine 62-cysteine 89, cysteine 90-cysteine 132, and cysteine 102-cysteine 139.

This sequence belongs to the 2S seed storage albumins family. In terms of assembly, heterodimer; disulfide-linked.

In terms of biological role, this is a 2S seed storage protein. This is Albumin-8 from Helianthus annuus (Common sunflower).